Here is a 146-residue protein sequence, read N- to C-terminus: Ribonuclease H (146 aa).

Residues 4 to 145 (ELNKVVIYTD…ADMLARSQIV (142 aa)) form the RNase H type-1 domain. Mg(2+) contacts are provided by Asp-13, Glu-51, Asp-73, and Asp-137.

It belongs to the RNase H family. As to quaternary structure, monomer. It depends on Mg(2+) as a cofactor.

It is found in the cytoplasm. It carries out the reaction Endonucleolytic cleavage to 5'-phosphomonoester.. In terms of biological role, endonuclease that specifically degrades the RNA of RNA-DNA hybrids. The sequence is that of Ribonuclease H from Ehrlichia chaffeensis (strain ATCC CRL-10679 / Arkansas).